The primary structure comprises 164 residues: uncharacterized protein (164 aa).

4 consecutive transmembrane segments (helical) span residues 25–45 (QFGF…PLLG), 63–83 (GMAV…VYIV), 120–140 (FWTA…ADFF), and 141–161 (TVQM…LMMM).

Belongs to the major facilitator superfamily.

It is found in the cell membrane. This is an uncharacterized protein from Bacillus subtilis (strain 168).